The primary structure comprises 368 residues: Phospho-N-acetylmuramoyl-pentapeptide-transferase (368 aa).

Helical transmembrane passes span 30 to 50 (AAAI…IRFL), 72 to 92 (VPTM…LLWA), 98 to 118 (HVWL…IDDY), 139 to 159 (VALG…SVLL), 170 to 190 (FSVD…TAVS), 201 to 221 (GLAA…AYLG), 238 to 258 (AGEI…FLWF), 262 to 284 (PAEV…VIAL), and 345 to 365 (KIVI…LMTL).

It belongs to the glycosyltransferase 4 family. MraY subfamily. It depends on Mg(2+) as a cofactor.

It localises to the cell inner membrane. The catalysed reaction is UDP-N-acetyl-alpha-D-muramoyl-L-alanyl-gamma-D-glutamyl-meso-2,6-diaminopimeloyl-D-alanyl-D-alanine + di-trans,octa-cis-undecaprenyl phosphate = di-trans,octa-cis-undecaprenyl diphospho-N-acetyl-alpha-D-muramoyl-L-alanyl-D-glutamyl-meso-2,6-diaminopimeloyl-D-alanyl-D-alanine + UMP. It participates in cell wall biogenesis; peptidoglycan biosynthesis. Its function is as follows. Catalyzes the initial step of the lipid cycle reactions in the biosynthesis of the cell wall peptidoglycan: transfers peptidoglycan precursor phospho-MurNAc-pentapeptide from UDP-MurNAc-pentapeptide onto the lipid carrier undecaprenyl phosphate, yielding undecaprenyl-pyrophosphoryl-MurNAc-pentapeptide, known as lipid I. In Chlorobaculum parvum (strain DSM 263 / NCIMB 8327) (Chlorobium vibrioforme subsp. thiosulfatophilum), this protein is Phospho-N-acetylmuramoyl-pentapeptide-transferase.